The chain runs to 216 residues: GTP cyclohydrolase 1 (216 aa).

Cys108, His111, and Cys179 together coordinate Zn(2+).

It belongs to the GTP cyclohydrolase I family. In terms of assembly, toroid-shaped homodecamer, composed of two pentamers of five dimers.

The catalysed reaction is GTP + H2O = 7,8-dihydroneopterin 3'-triphosphate + formate + H(+). It functions in the pathway cofactor biosynthesis; 7,8-dihydroneopterin triphosphate biosynthesis; 7,8-dihydroneopterin triphosphate from GTP: step 1/1. The protein is GTP cyclohydrolase 1 of Shewanella sp. (strain MR-7).